The chain runs to 633 residues: MASSPESAPPTNSTSSPSPPSNTNSTTSSPPAPSPPSPTPPQGDSSSSPPPDSTSPPAPQAPNPPNSSNNSPSPPSQGGGGERGNGGNNGGNDTPPSRGSPPSPPSRSNGDNGGSRSSPPGDTGGSRSDNPPSSGGSSGGGGGGRSNTNTAIIVGVLVGAGLLMIVLIIVCLRRKKKRKDSFYPEPMKGNQYQYYGNNNNNNASQNYPNWHLNSQGQNQQSTGGWGGGGPSPPPPPRMPTSGEDSSMYSGPSRPVLPPPSPALALGFNKSTFTYQELAAATGGFTDANLLGQGGFGYVHKGVLPSGKEVAVKSLKAGSGQGEREFQAEVDIISRVHHRYLVSLVGYCIADGQRMLVYEFVPNKTLEYHLHGKNLPVMEFSTRLRIALGAAKGLAYLHEDCHPRIIHRDIKSANILLDFNFDAMVADFGLAKLTSDNNTHVSTRVMGTFGYLAPEYASSGKLTEKSDVFSYGVMLLELITGKRPVDNSITMDDTLVDWARPLMARALEDGNFNELADARLEGNYNPQEMARMVTCAAASIRHSGRKRPKMSQIVRALEGEVSLDALNEGVKPGHSNVYGSLGASSDYSQTSYNADMKKFRQIALSSQEFPVSDCEGTSSNDSRDMGTKSPTPPK.

Residues 1-29 (MASSPESAPPTNSTSSPSPPSNTNSTTSS) are compositionally biased toward low complexity. Residues 1–145 (MASSPESAPP…GSSGGGGGGR (145 aa)) are disordered. The Extracellular segment spans residues 1–151 (MASSPESAPP…GGGRSNTNTA (151 aa)). N-linked (GlcNAc...) asparagine glycosylation is found at asparagine 12 and asparagine 24. Composition is skewed to pro residues over residues 30–41 (PPAPSPPSPTPP) and 48–65 (SPPP…PNPP). Asparagine 66 carries an N-linked (GlcNAc...) asparagine glycan. A compositionally biased stretch (gly residues) spans 77–90 (QGGGGERGNGGNNG). Residues 106 to 135 (SRSNGDNGGSRSSPPGDTGGSRSDNPPSSG) are compositionally biased toward low complexity. The span at 136–145 (GSSGGGGGGR) shows a compositional bias: gly residues. Residues 152-172 (IIVGVLVGAGLLMIVLIIVCL) traverse the membrane as a helical segment. Residues 173-633 (RRKKKRKDSF…MGTKSPTPPK (461 aa)) are Cytoplasmic-facing. Over residues 193–222 (QYYGNNNNNNASQNYPNWHLNSQGQNQQST) the composition is skewed to low complexity. Positions 193–255 (QYYGNNNNNN…SMYSGPSRPV (63 aa)) are disordered. Phosphothreonine is present on threonine 273. One can recognise a Protein kinase domain in the interval 284–562 (FTDANLLGQG…VRALEGEVSL (279 aa)). ATP-binding positions include 290–298 (LGQGGFGYV) and lysine 312. The residue at position 357 (tyrosine 357) is a Phosphotyrosine. The active-site Proton acceptor is the aspartate 408. The residue at position 441 (serine 441) is a Phosphoserine. Phosphothreonine occurs at positions 442 and 447. A Phosphotyrosine modification is found at tyrosine 455. Polar residues predominate over residues 608 to 619 (FPVSDCEGTSSN). The segment at 608-633 (FPVSDCEGTSSNDSRDMGTKSPTPPK) is disordered.

It belongs to the protein kinase superfamily. Ser/Thr protein kinase family. As to expression, mostly expressed in inflorescence bolts. Also present in roots, stems, germinated seeds, cotyledons, pollen, stamen and stigma.

The protein resides in the cell membrane. The catalysed reaction is L-seryl-[protein] + ATP = O-phospho-L-seryl-[protein] + ADP + H(+). The enzyme catalyses L-threonyl-[protein] + ATP = O-phospho-L-threonyl-[protein] + ADP + H(+). Activated by ABA and Ca(2+). In terms of biological role, required during abscisic acid (ABA)-mediated activation of Ca(2+) channels. Regulates ABA signaling pathways. Modulates the expression of genes related to cell elongation and ABA signaling during root growth. This chain is Proline-rich receptor-like protein kinase PERK4 (PERK4), found in Arabidopsis thaliana (Mouse-ear cress).